The primary structure comprises 512 residues: MKAGCSIVEKPEGGGGYQFPDWAYKTESSPGSRQIQLWHFILELLQKEEFRHVIAWQQGEYGEFVIKDPDEVARLWGRRKCKPQMNYDKLSRALRYYYNKRILHKTKGKRFTYKFNFNKLVMPNYPFINIRSSGVVPQSAPPVPTASSRFHFPPLDTHSPTNDVQPGRFSASSLTASGQESSNGTDRKTELSELEDGSAADWRRGVDPMSSRNAIGGGGIGHQKRKPDIMLPLFARPGMYPDPHSPFAVSPIPGRGGVLNVPISPALSLTPTIFSYSPSPGLSPFTSSSCFSFNPEEMKHYLHSQACSVFNYHLSPRTFPRYPGLMVPPLQCQMHPEESTQFSIKLQPPPVGRKNRERVESSEESAPVTTPTMASIPPRIKVEPASEKDPESLRQSAREKEEHTQEEGTVPSRTIEEEKGTIFARPAAPPIWPSVPISTPSEEPLEVTEDIEDRPGKEPSAPEKKEDALMPPKLRLKRRWNDDPEARELSKSGKFLWNGSGPQGLATAAADA.

The ETS DNA-binding region spans 35-116; that stretch reads IQLWHFILEL…KGKRFTYKFN (82 aa). Positions 136–222 are disordered; the sequence is VPQSAPPVPT…NAIGGGGIGH (87 aa). Phosphoserine occurs at positions 139, 159, and 315. Polar residues predominate over residues 158-184; sequence HSPTNDVQPGRFSASSLTASGQESSNG. The interval 336 to 512 is disordered; the sequence is PEESTQFSIK…QGLATAAADA (177 aa). The span at 380 to 406 shows a compositional bias: basic and acidic residues; that stretch reads IKVEPASEKDPESLRQSAREKEEHTQE. A Glycyl lysine isopeptide (Lys-Gly) (interchain with G-Cter in SUMO2) cross-link involves residue Lys-381. An N6-acetyllysine; alternate modification is found at Lys-388. A Glycyl lysine isopeptide (Lys-Gly) (interchain with G-Cter in SUMO2); alternate cross-link involves residue Lys-388. Positions 443 to 452 are enriched in acidic residues; the sequence is EPLEVTEDIE. Composition is skewed to basic and acidic residues over residues 453 to 468 and 479 to 491; these read DRPG…KEDA and RWND…ELSK.

This sequence belongs to the ETS family.

It is found in the nucleus. Functionally, transcriptional repressor that contribute to growth arrest during terminal macrophage differentiation by repressing target genes involved in Ras-dependent proliferation. Represses MMP1 promoter activity. This is ETS translocation variant 3 (ETV3) from Pan troglodytes (Chimpanzee).